We begin with the raw amino-acid sequence, 393 residues long: Potassium channel subfamily K member 4 (393 aa).

Topologically, residues 1-3 (MRS) are cytoplasmic. The helical transmembrane segment at 4–24 (TTLLALLALVLLYLVSGALVF) threads the bilayer. The Extracellular segment spans residues 25-87 (RALEQPHEQQ…NSTSNSSHSA (63 aa)). N78 and N82 each carry an N-linked (GlcNAc...) asparagine glycan. The segment at residues 88 to 102 (WDLGSAFFFSGTIIT) is an intramembrane region (helical). The K(+) site is built by T103, I104, G105, and Y106. Positions 103 to 108 (TIGYGN) are selectivity filter 1. An intramembrane segment occupies 103-109 (TIGYGNV). The Extracellular segment spans residues 110–117 (ALRTDAGR). Residues 118–150 (LFCIFYALVGIPLFGILLAGVGDRLGSSLRHGI) traverse the membrane as a helical segment. At 151 to 172 (GHIEAIFLKWHVPPELVRVLSA) the chain is on the cytoplasmic side. Residues 173-194 (MLFLLIGCLLFVLTPTFVFCYM) traverse the membrane as a helical segment. Topologically, residues 195–199 (EDWSK) are extracellular. Residues 200–213 (LEAIYFVIVTLTTV) constitute an intramembrane region (helical). K(+)-binding residues include T212, V213, G214, and F215. Positions 212-217 (TVGFGD) are selectivity filter 2. The stretch at 214–219 (GFGDYV) is an intramembrane region. Over 220–233 (AGADPRQDSPAYQP) the chain is Extracellular. A helical transmembrane segment spans residues 234–260 (LVWFWILLGLAYFASVLTTIGNWLRVV). The Cytoplasmic segment spans residues 261 to 393 (SRRTRAEMGG…GRPRDKGVPV (133 aa)). A disordered region spans residues 285 to 393 (RVTQRAGPAA…GRPRDKGVPV (109 aa)). Positions 319 to 332 (SPSPPEKAQPPSPP) are enriched in pro residues. The span at 365–384 (PRGRRRPNPPRKPVRPRGPG) shows a compositional bias: basic residues.

Belongs to the two pore domain potassium channel (TC 1.A.1.8) family. Homodimer; disulfide-linked. Forms heterodimers with other 2-pore domain K(+) channel subunits, such as KCNK2 and KCNK10. Post-translationally, N-glycosylated.

The protein localises to the cell membrane. It is found in the cell projection. Its subcellular location is the axon. It carries out the reaction K(+)(in) = K(+)(out). It catalyses the reaction Rb(+)(in) = Rb(+)(out). The catalysed reaction is Cs(+)(in) = Cs(+)(out). With respect to regulation, activated by mechanical stretch and arachidonic acid. In terms of biological role, k(+) channel that conducts voltage-dependent outward rectifying currents upon membrane depolarization. Voltage sensing is coupled to K(+) electrochemical gradient in an 'ion flux gating' mode where outward but not inward ion flow opens the gate. Converts to voltage-independent 'leak' conductance mode upon stimulation by various stimuli including mechanical membrane stretch, basic pH, heat and lipids. Homo- and heterodimerizes to form functional channels with distinct regulatory and gating properties. At trigeminal A-beta afferent nerves, the heterodimer of KCNK2/TREK-1 and KCNK4/TRAAK is mostly coexpressed at nodes of Ranvier where it conducts voltage-independent mechanosensitive and thermosensitive currents, allowing rapid action potential repolarization, high speed and high frequence saltatory conduction on myelinated nerves to ensure prompt sensory responses. Permeable to other monovalent cations such as Rb(+) and Cs(+). The polypeptide is Potassium channel subfamily K member 4 (Homo sapiens (Human)).